Reading from the N-terminus, the 603-residue chain is UvrABC system protein C (603 aa).

The GIY-YIG domain occupies 15–92; it reads DQPGCYLMKN…IQKHQPYYNI (78 aa). The region spanning 197-232 is the UVR domain; the sequence is AQVKKQLTARMERAAGQLEFERAAEIRDQLHYIEVT.

Belongs to the UvrC family. Interacts with UvrB in an incision complex.

It is found in the cytoplasm. Its function is as follows. The UvrABC repair system catalyzes the recognition and processing of DNA lesions. UvrC both incises the 5' and 3' sides of the lesion. The N-terminal half is responsible for the 3' incision and the C-terminal half is responsible for the 5' incision. The protein is UvrABC system protein C of Limosilactobacillus fermentum (strain NBRC 3956 / LMG 18251) (Lactobacillus fermentum).